The sequence spans 363 residues: Phosphoserine aminotransferase (363 aa).

Arg42 is a binding site for L-glutamate. Pyridoxal 5'-phosphate contacts are provided by residues 76 to 77 (AR), Trp104, Thr155, Asp175, and Gln198. The residue at position 199 (Lys199) is an N6-(pyridoxal phosphate)lysine. 240 to 241 (NT) provides a ligand contact to pyridoxal 5'-phosphate.

Belongs to the class-V pyridoxal-phosphate-dependent aminotransferase family. SerC subfamily. In terms of assembly, homodimer. Requires pyridoxal 5'-phosphate as cofactor.

It is found in the cytoplasm. The catalysed reaction is O-phospho-L-serine + 2-oxoglutarate = 3-phosphooxypyruvate + L-glutamate. It carries out the reaction 4-(phosphooxy)-L-threonine + 2-oxoglutarate = (R)-3-hydroxy-2-oxo-4-phosphooxybutanoate + L-glutamate. The protein operates within amino-acid biosynthesis; L-serine biosynthesis; L-serine from 3-phospho-D-glycerate: step 2/3. It participates in cofactor biosynthesis; pyridoxine 5'-phosphate biosynthesis; pyridoxine 5'-phosphate from D-erythrose 4-phosphate: step 3/5. Catalyzes the reversible conversion of 3-phosphohydroxypyruvate to phosphoserine and of 3-hydroxy-2-oxo-4-phosphonooxybutanoate to phosphohydroxythreonine. The sequence is that of Phosphoserine aminotransferase (serC) from Edwardsiella ictaluri (strain 93-146).